Reading from the N-terminus, the 509-residue chain is Solute carrier family 2, facilitated glucose transporter member 4 (509 aa).

At 1–24 the chain is on the cytoplasmic side; it reads MPSGFQQIGSEDGEPPRQRVTGTL. Residues 7 to 13 form an interaction with SRFBP1 region; it reads QIGSEDG. At S10 the chain carries Phosphoserine. The helical transmembrane segment at 25-45 threads the bilayer; the sequence is VLAVFSAVLGSLQFGYNIGVI. The Extracellular segment spans residues 46–81; that stretch reads NAPQKVIEQSYNETWLGRQGPEGPGSIPPGTLTTLW. N57 carries N-linked (GlcNAc...) asparagine glycosylation. The helical transmembrane segment at 82–102 threads the bilayer; that stretch reads ALSVAIFSVGGMISSFLIGII. Residues 103–111 are Cytoplasmic-facing; the sequence is SQWLGRKRA. Residues 112–132 form a helical membrane-spanning segment; that stretch reads MLFNNALAVLGGTLMGLAKAA. Topologically, residues 133-142 are extracellular; sequence ASYEMLILGR. A helical membrane pass occupies residues 143-163; the sequence is FFIGAYSGLTSGLVPMYVGEI. At 164-171 the chain is on the cytoplasmic side; it reads APTHLRGA. The helical transmembrane segment at 172–192 threads the bilayer; sequence LGTLNQLAIVTGILIAQVLGL. Q177 lines the D-glucose pocket. Over 193–200 the chain is Extracellular; sequence ESMLGTAT. The chain crosses the membrane as a helical span at residues 201–221; sequence LWPLLLGITVLPALLQMVLLP. Over 222-287 the chain is Cytoplasmic; that stretch reads LCPESPRYLY…LLGSHTHRQP (66 aa). C223 carries S-palmitoyl cysteine lipidation. S274 is subject to Phosphoserine; by SGK1. The chain crosses the membrane as a helical span at residues 288-308; sequence LVIAIVLQLSQQLSGINAVFY. D-glucose-binding positions include 298-299 and N304; that span reads QQ. Over 309 to 323 the chain is Extracellular; it reads YSTSIFESAGVEKPA. A helical transmembrane segment spans residues 324–344; that stretch reads YATIGAGVVNTVFTLVSVFLV. A D-glucose-binding site is contributed by N333. At 345–353 the chain is on the cytoplasmic side; it reads ERAGRRTLH. The helical transmembrane segment at 354-374 threads the bilayer; the sequence is LLGLAGMCGCAILMTVALLLL. Residues 375 to 384 are Extracellular-facing; it reads ERVPAMSYVS. Residues 385 to 405 form a helical membrane-spanning segment; that stretch reads IVAIFGFVAFFEIGPGPIPWF. 2 residues coordinate D-glucose: E396 and W404. The Cytoplasmic segment spans residues 406 to 417; it reads IVAELFSQGPRP. The chain crosses the membrane as a helical span at residues 418–438; sequence AAMAVAGFSNWTCNFIIGMGF. Residues 439–445 lie on the Extracellular side of the membrane; sequence QYVADAM. A helical transmembrane segment spans residues 446 to 466; that stretch reads GPYVFLLFAVLLLGFFIFTFL. The Cytoplasmic segment spans residues 467–509; sequence KVPETRGRTFDQISAVFHRTPSLLEQEVKPSTELEYLGPDEHD. T486 is subject to Phosphothreonine. S488 carries the phosphoserine modification. Residues 489–490 carry the Dileucine internalization motif motif; that stretch reads LL.

The protein belongs to the major facilitator superfamily. Sugar transporter (TC 2.A.1.1) family. Glucose transporter subfamily. In terms of assembly, binds to DAXX. Interacts via its N-terminus with SRFBP1. Interacts with NDUFA9. Interacts with TRARG1; the interaction is required for proper SLC2A4 recycling after insulin stimulation. Sumoylated. Post-translationally, palmitoylated. Palmitoylation by ZDHHC7 controls the insulin-dependent translocation of GLUT4 to the plasma membrane.

It is found in the cell membrane. The protein localises to the endomembrane system. Its subcellular location is the cytoplasm. It localises to the perinuclear region. The catalysed reaction is D-glucose(out) = D-glucose(in). In terms of biological role, insulin-regulated facilitative glucose transporter, which plays a key role in removal of glucose from circulation. Response to insulin is regulated by its intracellular localization: in the absence of insulin, it is efficiently retained intracellularly within storage compartments in muscle and fat cells. Upon insulin stimulation, translocates from these compartments to the cell surface where it transports glucose from the extracellular milieu into the cell. In Bos taurus (Bovine), this protein is Solute carrier family 2, facilitated glucose transporter member 4.